The following is a 497-amino-acid chain: 3-octaprenyl-4-hydroxybenzoate carboxy-lyase (497 aa).

N172 serves as a coordination point for Mn(2+). Prenylated FMN is bound by residues 175 to 177 (IYR), 189 to 191 (RWL), and 194 to 195 (RG). A Mn(2+)-binding site is contributed by E238. The Proton donor role is filled by D287.

The protein belongs to the UbiD family. As to quaternary structure, homohexamer. Requires prenylated FMN as cofactor. Mn(2+) serves as cofactor.

It localises to the cell membrane. The enzyme catalyses a 4-hydroxy-3-(all-trans-polyprenyl)benzoate + H(+) = a 2-(all-trans-polyprenyl)phenol + CO2. It functions in the pathway cofactor biosynthesis; ubiquinone biosynthesis. Catalyzes the decarboxylation of 3-octaprenyl-4-hydroxy benzoate to 2-octaprenylphenol, an intermediate step in ubiquinone biosynthesis. This chain is 3-octaprenyl-4-hydroxybenzoate carboxy-lyase, found in Enterobacter sp. (strain 638).